The following is a 241-amino-acid chain: Ureidoacrylate amidohydrolase RutB (241 aa).

D38 serves as the catalytic Proton acceptor. Residue K147 is part of the active site. The active-site Nucleophile is the C180.

The protein belongs to the isochorismatase family. RutB subfamily.

It carries out the reaction (Z)-3-ureidoacrylate + H2O + H(+) = (Z)-3-aminoacrylate + NH4(+) + CO2. The enzyme catalyses (Z)-3-ureidoacrylate + H2O = (Z)-3-aminoacrylate + carbamate + H(+). It catalyses the reaction (Z)-2-methylureidoacrylate + H2O + H(+) = (Z)-2-methylaminoacrylate + NH4(+) + CO2. In terms of biological role, hydrolyzes ureidoacrylate to form aminoacrylate and carbamate. The carbamate hydrolyzes spontaneously, thereby releasing one of the nitrogen atoms of the pyrimidine ring as ammonia and one of its carbon atoms as CO2. This chain is Ureidoacrylate amidohydrolase RutB, found in Haliangium ochraceum (strain DSM 14365 / JCM 11303 / SMP-2).